The sequence spans 634 residues: Chaperone protein HtpG (634 aa).

The interval 1–344 (MNETVANNKE…SNDLPLNVSR (344 aa)) is a; substrate-binding. The b stretch occupies residues 345-561 (EILQDNKVTQ…DFEMGTQMAK (217 aa)). The tract at residues 562–634 (LLAAAGQAVP…TAINSLLTKG (73 aa)) is c.

Belongs to the heat shock protein 90 family. Homodimer.

It is found in the cytoplasm. Its function is as follows. Molecular chaperone. Has ATPase activity. The chain is Chaperone protein HtpG from Vibrio vulnificus (strain YJ016).